Consider the following 202-residue polypeptide: Holliday junction branch migration complex subunit RuvA (202 aa).

The segment at 1 to 62 (MIGYLRGRLH…EDAMELYGFT (62 aa)) is domain I. The tract at residues 63–141 (RPEELHLFTL…KSGLVDGTET (79 aa)) is domain II. The segment at 141–145 (TEAIP) is flexible linker. A domain III region spans residues 146 to 202 (AGGGDNDEALAALLALGYSREEIGPILARVRQELGNAAPTTAVLQAVLKTFGRGGGD).

This sequence belongs to the RuvA family. Homotetramer. Forms an RuvA(8)-RuvB(12)-Holliday junction (HJ) complex. HJ DNA is sandwiched between 2 RuvA tetramers; dsDNA enters through RuvA and exits via RuvB. An RuvB hexamer assembles on each DNA strand where it exits the tetramer. Each RuvB hexamer is contacted by two RuvA subunits (via domain III) on 2 adjacent RuvB subunits; this complex drives branch migration. In the full resolvosome a probable DNA-RuvA(4)-RuvB(12)-RuvC(2) complex forms which resolves the HJ.

The protein resides in the cytoplasm. Its function is as follows. The RuvA-RuvB-RuvC complex processes Holliday junction (HJ) DNA during genetic recombination and DNA repair, while the RuvA-RuvB complex plays an important role in the rescue of blocked DNA replication forks via replication fork reversal (RFR). RuvA specifically binds to HJ cruciform DNA, conferring on it an open structure. The RuvB hexamer acts as an ATP-dependent pump, pulling dsDNA into and through the RuvAB complex. HJ branch migration allows RuvC to scan DNA until it finds its consensus sequence, where it cleaves and resolves the cruciform DNA. This is Holliday junction branch migration complex subunit RuvA from Moorella thermoacetica (strain ATCC 39073 / JCM 9320).